The chain runs to 985 residues: Translation initiation factor IF-2 (985 aa).

Composition is skewed to basic and acidic residues over residues 49-58 (QYGKKQEKSS), 65-89 (IQREHGRGQGMEDKKEKDQLFRPDN), and 99-113 (VPNRPPDRRYEDKAK). Residues 49-401 (QYGKKQEKSS…QQSAPPPILD (353 aa)) form a disordered region. Residues 125–136 (SKTTTNSENEQT) show a composition bias toward polar residues. Low complexity predominate over residues 137–162 (APRQGSAQQSGQGRPQANRPQGSQGR). Gly residues-rich tracts occupy residues 180–246 (PQGG…GQGR) and 288–324 (PQGGQGRPYGDRPQGGQGRHYGDRPQGGQGRPQGAGR). A compositionally biased stretch (basic and acidic residues) spans 349–377 (KAPDKTKGDRRKNYEKDGKWADGQIEKNK). Residues 378–391 (LFKGRNNKNKKRQH) show a composition bias toward basic residues. In terms of domain architecture, tr-type G spans 485-654 (LRPPVVTIMG…LLVAEVHELK (170 aa)). Residues 494-501 (GHVDHGKT) form a G1 region. 494-501 (GHVDHGKT) is a binding site for GTP. The segment at 519–523 (GITQH) is G2. Positions 540–543 (DTPG) are G3. GTP contacts are provided by residues 540–544 (DTPGH) and 594–597 (NKMD). The G4 stretch occupies residues 594–597 (NKMD). The segment at 630–632 (SAK) is G5.

It belongs to the TRAFAC class translation factor GTPase superfamily. Classic translation factor GTPase family. IF-2 subfamily.

The protein localises to the cytoplasm. Functionally, one of the essential components for the initiation of protein synthesis. Protects formylmethionyl-tRNA from spontaneous hydrolysis and promotes its binding to the 30S ribosomal subunits. Also involved in the hydrolysis of GTP during the formation of the 70S ribosomal complex. The protein is Translation initiation factor IF-2 of Desulforamulus reducens (strain ATCC BAA-1160 / DSM 100696 / MI-1) (Desulfotomaculum reducens).